The sequence spans 144 residues: 3-hydroxyacyl-[acyl-carrier-protein] dehydratase FabZ (144 aa).

Histidine 51 is a catalytic residue.

The protein belongs to the thioester dehydratase family. FabZ subfamily.

It localises to the cytoplasm. The catalysed reaction is a (3R)-hydroxyacyl-[ACP] = a (2E)-enoyl-[ACP] + H2O. In terms of biological role, involved in unsaturated fatty acids biosynthesis. Catalyzes the dehydration of short chain beta-hydroxyacyl-ACPs and long chain saturated and unsaturated beta-hydroxyacyl-ACPs. The polypeptide is 3-hydroxyacyl-[acyl-carrier-protein] dehydratase FabZ (Clostridium botulinum (strain ATCC 19397 / Type A)).